We begin with the raw amino-acid sequence, 622 residues long: Sodium/potassium/calcium exchanger 4 (622 aa).

The signal sequence occupies residues 1–38; that stretch reads MALRGTLRPLKVRRRREMLPQQVGFVCAVLALVCCASG. The Extracellular segment spans residues 39-97; sequence LFGSLGHKTASASKRVLPDTWRNRKLMAPVNGTQTAKNCTDPAIHEFPTDLFSNKERQH. N-linked (GlcNAc...) asparagine glycans are attached at residues Asn69 and Asn76. The helical transmembrane segment at 98 to 118 threads the bilayer; sequence GAVLLHILGALYMFYALAIVC. Residues 119 to 142 lie on the Cytoplasmic side of the membrane; that stretch reads DDFFVPSLEKICERLHLSEDVAGA. The Alpha-1 repeat unit spans residues 139–179; sequence VAGATFMAAGSSTPELFASVIGVFITHGDVGVGTIVGSAVF. Residues 143 to 163 form a helical membrane-spanning segment; it reads TFMAAGSSTPELFASVIGVFI. At 164-172 the chain is on the extracellular side; that stretch reads THGDVGVGT. Residues 173–193 form a helical membrane-spanning segment; it reads IVGSAVFNILCIIGVCGLFAG. Residues 194 to 200 lie on the Cytoplasmic side of the membrane; it reads QVVRLTW. Residues 201–221 traverse the membrane as a helical segment; it reads WAVCRDSVYYTISVIVLIVFI. The Extracellular segment spans residues 222–224; the sequence is YDE. Residues 225–245 form a helical membrane-spanning segment; it reads QIVWWEGLVLIILYVFYILIM. Residues 246–457 are Cytoplasmic-facing; it reads KYNVKMQAFF…RWEKFFMVTF (212 aa). A disordered region spans residues 358–410; sequence ANGVSSKPLQNGRHENIENGNVPVENPEDPQQNQEQQPPPQPPPPEPEPVEAD. The span at 380–393 shows a compositional bias: low complexity; sequence PVENPEDPQQNQEQ. The span at 394–404 shows a compositional bias: pro residues; the sequence is QPPPQPPPPEP. The helical transmembrane segment at 458 to 478 threads the bilayer; sequence ITATLWIAVFSYIMVWLVTII. Gly479 is a topological domain (extracellular). Residues 480-500 form a helical membrane-spanning segment; it reads YTLGIPDVIMGITFLAAGTSV. Residues 495 to 526 form an Alpha-2 repeat; it reads AAGTSVPDCMASLIVARQGLGDMAVSNTIGSN. Residues 501-526 are Cytoplasmic-facing; that stretch reads PDCMASLIVARQGLGDMAVSNTIGSN. A helical transmembrane segment spans residues 527–547; sequence VFDILVGLGVPWGLQTMVVNY. Residues 548 to 557 lie on the Extracellular side of the membrane; the sequence is GSTVKINSRG. The helical transmembrane segment at 558 to 578 threads the bilayer; that stretch reads LVYSVVLLLGSVALTVLGIHL. The Cytoplasmic segment spans residues 579–586; it reads NKWRLDRK. A helical membrane pass occupies residues 587-607; the sequence is LGVYVLVLYAIFLCFSIMIEF. At 608–622 the chain is on the extracellular side; sequence NVFTFVNLPMCREDD.

The protein belongs to the Ca(2+):cation antiporter (CaCA) (TC 2.A.19) family. SLC24A subfamily. In terms of tissue distribution, expressed abundantly in all regions of the brain, aorta, lung and thymus. Expressed at lower levels in the stomach and intestine.

It localises to the cell membrane. The protein localises to the cytoplasm. It catalyses the reaction Ca(2+)(out) + K(+)(out) + 4 Na(+)(in) = Ca(2+)(in) + K(+)(in) + 4 Na(+)(out). Functionally, calcium, potassium:sodium antiporter that transports 1 Ca(2+) and 1 K(+) in exchange for 4 Na(+). Controls the rapid response termination and proper regulation of adaptation in olfactory sensory neurons (OSNs) which subsequently influences how odor information is encoded and perceived. May play a role in calcium transport during amelogenesis. The polypeptide is Sodium/potassium/calcium exchanger 4 (Homo sapiens (Human)).